Here is a 43-residue protein sequence, read N- to C-terminus: Protein PsbN (43 aa).

A helical membrane pass occupies residues 7–27; the sequence is LIVFIASLLLGVTGYSVYTAF.

Belongs to the PsbN family.

The protein localises to the plastid. Its subcellular location is the chloroplast thylakoid membrane. Functionally, may play a role in photosystem I and II biogenesis. The sequence is that of Protein PsbN from Rhodomonas salina (Cryptomonas salina).